Reading from the N-terminus, the 108-residue chain is Probable 4-amino-4-deoxy-L-arabinose-phosphoundecaprenol flippase subunit ArnE (108 aa).

A run of 3 helical transmembrane segments spans residues 36-56 (SLWL…LVLQ), 58-78 (LDVG…TLAG), and 85-105 (PVDV…FQLG).

This sequence belongs to the ArnE family. In terms of assembly, heterodimer of ArnE and ArnF.

It localises to the cell inner membrane. It participates in bacterial outer membrane biogenesis; lipopolysaccharide biosynthesis. Functionally, translocates 4-amino-4-deoxy-L-arabinose-phosphoundecaprenol (alpha-L-Ara4N-phosphoundecaprenol) from the cytoplasmic to the periplasmic side of the inner membrane. The chain is Probable 4-amino-4-deoxy-L-arabinose-phosphoundecaprenol flippase subunit ArnE from Pseudomonas syringae pv. syringae (strain B728a).